The chain runs to 162 residues: Ribosome maturation factor RimP (162 aa).

It belongs to the RimP family.

Its subcellular location is the cytoplasm. Its function is as follows. Required for maturation of 30S ribosomal subunits. This is Ribosome maturation factor RimP from Leptospira interrogans serogroup Icterohaemorrhagiae serovar copenhageni (strain Fiocruz L1-130).